Reading from the N-terminus, the 445-residue chain is MLQIKTEKEELDCGDDQNPKESSAVPLTDGASPEPQPQILQIKIKEEEPDYEYYLPTIKREMDPVPGAASPLAESEILQIKIKEEEPDSEDDGNSAATSAVTFRDWDNCWSDEENWDDSRPQLNQYNSDFPGSADTANTPAINTVLSRGNGLFVVNQEKRVATNSSCQSDTGHVDCSVGSEPSGFICCKCGDSFAHHSDLHTHLYACAGHNITSSFTNASEEGQHSHKNGGVLPREKPFKCTVCGKCFTLKNSLQLHHRIHTGEKPFTCTECGKSFAQSCSLQLHSRTHTGYNPYVCTECGKRFSSNSGLRRHMRTHTGVKPYACKECGKFFSDLSTLHRHQNSHKGEKPFICTECGKGFTLKDSLHRHQRTHTGEKPFICSQCGKSYSQSSNLIKHQMIHTGVKPFSCSECGKCFAVKDGLRNHQRVHMRRNYSAAQNVAEFSL.

The disordered stretch occupies residues 1–38 (MLQIKTEKEELDCGDDQNPKESSAVPLTDGASPEPQPQ). Residue S89 is modified to Phosphoserine; by CK2. Residues 185-210 (FICCKCGDSFAHHSDLHTHLYACAGH) form a C2H2-type 1; atypical zinc finger. 7 consecutive C2H2-type zinc fingers follow at residues 239–261 (FKCT…HRIH), 267–289 (FTCT…SRTH), 295–317 (YVCT…MRTH), 323–345 (YACK…QNSH), 351–373 (FICT…QRTH), 379–401 (FICS…QMIH), and 407–429 (FSCS…QRVH).

Its function is as follows. Binds to RNA homomers. In Xenopus laevis (African clawed frog), this protein is Gastrula zinc finger protein 5-1.